A 123-amino-acid polypeptide reads, in one-letter code: Large ribosomal subunit protein uL18 (123 aa).

Belongs to the universal ribosomal protein uL18 family. As to quaternary structure, part of the 50S ribosomal subunit; part of the 5S rRNA/L5/L18/L25 subcomplex. Contacts the 5S and 23S rRNAs.

In terms of biological role, this is one of the proteins that bind and probably mediate the attachment of the 5S RNA into the large ribosomal subunit, where it forms part of the central protuberance. The protein is Large ribosomal subunit protein uL18 of Symbiobacterium thermophilum (strain DSM 24528 / JCM 14929 / IAM 14863 / T).